The primary structure comprises 249 residues: DNA repair protein RecO (249 aa).

It belongs to the RecO family.

Involved in DNA repair and RecF pathway recombination. The sequence is that of DNA repair protein RecO from Polaromonas naphthalenivorans (strain CJ2).